Here is a 109-residue protein sequence, read N- to C-terminus: Hainantoxin-XVIII-4 (109 aa).

The signal sequence occupies residues 1-18 (MKLSIIIIATSLVIAVVA). A propeptide spanning residues 19–46 (FPSKDSKAIENDKTEQRMEIVVQETARA) is cleaved from the precursor. 3 cysteine pairs are disulfide-bonded: Cys-55–Cys-68, Cys-59–Cys-108, and Cys-61–Cys-81.

It belongs to the neurotoxin 25 family. F7 subfamily. Expressed by the venom gland.

It is found in the secreted. Putative ion channel inhibitor. This chain is Hainantoxin-XVIII-4, found in Cyriopagopus hainanus (Chinese bird spider).